The chain runs to 271 residues: MAKVPDMFEDLKNCYSENEEDSSSIDHLSLNQKSFYDVSYGPLHEGCMDQSVSLSISEISKTSKLTFKQSMVVVSTNGKVLKKRRLSLSQSITDNNLEAIANDSEEEIIKPRSAPFSFLSNMTYHFIRIIKHEFILNDTLNQTIIRANDQHLTAAAIHNLDEAVKFDMGAYTSSKDDTKVPVILRISKTQLYVSAQDEDQPVLLKEMPEINKTITGSETNFLFFWETHGTKNYFISVAHPNLFIATKHDNWVCLAKGLPSITDFQILENQA.

Positions M1–R112 are excised as a propeptide. K82 is subject to N6-acetyllysine. The segment at K82–L86 is nuclear localization signal (NLS). S87 carries the phosphoserine modification. N102, N121, N137, N141, and N211 each carry an N-linked (GlcNAc...) asparagine glycan.

The protein belongs to the IL-1 family. In terms of assembly, monomer. Interacts with TMED10; the interaction mediates the translocation from the cytoplasm into the ERGIC (endoplasmic reticulum-Golgi intermediate compartment) and thereby secretion. Interacts with IL1R1. Interacts with S100A13; this interaction is the first step in the export of IL1A, followed by direct translocation of this complex across the plasma membrane. In terms of processing, acetylated within its nuclear localization sequence, which impacts subcellular localization. Proteolytic processed by CAPN1 in a calcium-dependent manner. Cleavage from 31 kDa precursor to 18 kDa biologically active molecules. Post-translationally, phosphorylated. Phosphorylation greatly enhances susceptibility to digestion and promotes the conversion of pre-IL1A alpha to the biologically active IL1A.

It localises to the nucleus. The protein localises to the cytoplasm. It is found in the secreted. In terms of biological role, cytokine constitutively present intracellularly in nearly all resting non-hematopoietic cells that plays an important role in inflammation and bridges the innate and adaptive immune systems. After binding to its receptor IL1R1 together with its accessory protein IL1RAP, forms the high affinity interleukin-1 receptor complex. Signaling involves the recruitment of adapter molecules such as MYD88, IRAK1 or IRAK4. In turn, mediates the activation of NF-kappa-B and the three MAPK pathways p38, p42/p44 and JNK pathways. Within the cell, acts as an alarmin and cell death results in its liberation in the extracellular space after disruption of the cell membrane to induce inflammation and alert the host to injury or damage. In addition to its role as a danger signal, which occurs when the cytokine is passively released by cell necrosis, directly senses DNA damage and acts as signal for genotoxic stress without loss of cell integrity. The polypeptide is Interleukin-1 alpha (IL1A) (Macaca mulatta (Rhesus macaque)).